Here is a 198-residue protein sequence, read N- to C-terminus: Probable GTP-binding protein EngB (198 aa).

One can recognise an EngB-type G domain in the interval 22–195 (DLPEIALAGR…WKAIHKMTKT (174 aa)). Residues 30–37 (GRSNVGKS), 57–61 (GKTQT), 75–78 (DVPG), 142–145 (TKAD), and 174–176 (FSS) contribute to the GTP site. Positions 37 and 59 each coordinate Mg(2+).

It belongs to the TRAFAC class TrmE-Era-EngA-EngB-Septin-like GTPase superfamily. EngB GTPase family. Requires Mg(2+) as cofactor.

Functionally, necessary for normal cell division and for the maintenance of normal septation. The sequence is that of Probable GTP-binding protein EngB from Bacillus cereus (strain G9842).